Here is a 552-residue protein sequence, read N- to C-terminus: 4-coumarate--CoA ligase-like 3 (552 aa).

Residues Ser-207, Ser-208, Gly-209, Thr-210, Thr-211, and Lys-215 each coordinate ATP. Phe-252 contacts (E)-4-coumaroyl-AMP. Residue Arg-273 coordinates CoA. The interval 275–346 (GLDDMMQAVE…EKYPTVNIFQ (72 aa)) is SBD1. (E)-4-coumaroyl-AMP is bound by residues Gly-324, Gln-346, Gly-347, and Thr-351. Residues Gln-346, Gly-347, Thr-351, Asp-432, and Arg-447 each contribute to the ATP site. The segment at 347 to 411 (GYALTESHGS…LKGPSISKGY (65 aa)) is SBD2. Lys-449 and Lys-453 together coordinate (E)-4-coumaroyl-AMP. CoA-binding residues include Lys-455 and Gly-456. Lys-538 provides a ligand contact to ATP. A Microbody targeting signal motif is present at residues 550-552 (SKL).

Belongs to the ATP-dependent AMP-binding enzyme family. It depends on Mg(2+) as a cofactor.

Its subcellular location is the peroxisome. The enzyme catalyses (E)-4-coumarate + ATP + CoA = (E)-4-coumaroyl-CoA + AMP + diphosphate. It carries out the reaction (E)-4-coumarate + ATP + H(+) = (E)-4-coumaroyl-AMP + diphosphate. The catalysed reaction is (E)-4-coumaroyl-AMP + CoA = (E)-4-coumaroyl-CoA + AMP + H(+). Its function is as follows. Carboxylate--CoA ligase that may use 4-coumarate as substrate. Follows a two-step reaction mechanism, wherein the carboxylate substrate first undergoes adenylation by ATP, followed by a thioesterification in the presence of CoA to yield the final CoA thioester. This Arabidopsis thaliana (Mouse-ear cress) protein is 4-coumarate--CoA ligase-like 3.